Reading from the N-terminus, the 140-residue chain is Large ribosomal subunit protein uL16 (140 aa).

Belongs to the universal ribosomal protein uL16 family. As to quaternary structure, part of the 50S ribosomal subunit.

Binds 23S rRNA and is also seen to make contacts with the A and possibly P site tRNAs. The sequence is that of Large ribosomal subunit protein uL16 from Trichlorobacter lovleyi (strain ATCC BAA-1151 / DSM 17278 / SZ) (Geobacter lovleyi).